The sequence spans 80 residues: Acyl carrier protein (80 aa).

A Carrier domain is found at 4-79 (EAILEKVRSI…DAVKYIEDKQ (76 aa)). Residue Ser39 is modified to O-(pantetheine 4'-phosphoryl)serine.

It belongs to the acyl carrier protein (ACP) family. Post-translationally, 4'-phosphopantetheine is transferred from CoA to a specific serine of apo-ACP by AcpS. This modification is essential for activity because fatty acids are bound in thioester linkage to the sulfhydryl of the prosthetic group.

The protein resides in the cytoplasm. It functions in the pathway lipid metabolism; fatty acid biosynthesis. In terms of biological role, carrier of the growing fatty acid chain in fatty acid biosynthesis. The chain is Acyl carrier protein from Parasynechococcus marenigrum (strain WH8102).